Here is a 159-residue protein sequence, read N- to C-terminus: Large ribosomal subunit protein uL13 (159 aa).

The protein belongs to the universal ribosomal protein uL13 family. In terms of assembly, part of the 50S ribosomal subunit.

Its function is as follows. This protein is one of the early assembly proteins of the 50S ribosomal subunit, although it is not seen to bind rRNA by itself. It is important during the early stages of 50S assembly. This Methanopyrus kandleri (strain AV19 / DSM 6324 / JCM 9639 / NBRC 100938) protein is Large ribosomal subunit protein uL13.